The primary structure comprises 184 residues: MIEHHPTTIYGTTIVTVRKGNKVVIAGDGQVSLGNTVMKGNARKVRRIGKGNVIAGFAGATADAFTLLERLEAKLEQYPDQLMRASVELAKDWRTDRYLRKLEAMMLVADSKVTLALTGTGDVLEPEHGVMAIGSGGNYALAAARALVDTDKSAEEIARKAMDIAADICIYTNHNIIVESLDAE.

The active site involves Thr12. Residues Ala166, Cys169, and Thr172 each contribute to the Na(+) site.

This sequence belongs to the peptidase T1B family. HslV subfamily. In terms of assembly, a double ring-shaped homohexamer of HslV is capped on each side by a ring-shaped HslU homohexamer. The assembly of the HslU/HslV complex is dependent on binding of ATP.

Its subcellular location is the cytoplasm. The enzyme catalyses ATP-dependent cleavage of peptide bonds with broad specificity.. With respect to regulation, allosterically activated by HslU binding. Functionally, protease subunit of a proteasome-like degradation complex believed to be a general protein degrading machinery. This is ATP-dependent protease subunit HslV from Brucella anthropi (strain ATCC 49188 / DSM 6882 / CCUG 24695 / JCM 21032 / LMG 3331 / NBRC 15819 / NCTC 12168 / Alc 37) (Ochrobactrum anthropi).